Here is a 1099-residue protein sequence, read N- to C-terminus: Transmembrane protein 132C (1099 aa).

The first 31 residues, 1–31, serve as a signal peptide directing secretion; sequence MRSEGAAPRRAARYGALSLVLATLLGQVTES. At 32–915 the chain is on the extracellular side; it reads RGVMDNIQRF…LMQTAHGLSD (884 aa). Asparagine 95 carries N-linked (GlcNAc...) asparagine glycosylation. A disordered region spans residues 237 to 260; sequence GDCTGGDTRKDNAIRPGKDGQEGR. N-linked (GlcNAc...) asparagine glycosylation is found at asparagine 314 and asparagine 371. Residues 801 to 872 are disordered; the sequence is DADSSQTGEK…NNVGKSGRRD (72 aa). The segment covering 813-849 has biased composition (basic and acidic residues); it reads EEIKNHASDRRQKIQDLERPGQDELYHGNFPGDREEG. A helical transmembrane segment spans residues 916 to 936; the sequence is LEIGMYALLGVFCLAILVFLI. The Cytoplasmic portion of the chain corresponds to 937 to 1099; it reads NCATFAFKYR…TYLEKFQDSV (163 aa). Positions 1002–1045 are disordered; the sequence is NHLLLNGGSQKPTQSQVHRPPGSGGRQTREPRQEPANSPTSKMK. Positions 1008–1018 are enriched in polar residues; that stretch reads GGSQKPTQSQV.

The protein belongs to the TMEM132 family.

Its subcellular location is the membrane. The chain is Transmembrane protein 132C (Tmem132c) from Mus musculus (Mouse).